Consider the following 324-residue polypeptide: Zinc finger C2HC domain-containing protein 1A (324 aa).

The C2HC/C3H-type 1 zinc finger occupies 15–44 (DLLPCKICGRTFFPLALKKHGPICQKTATK). The Zn(2+) site is built by Cys19, Cys22, His34, and Cys38. The disordered stretch occupies residues 43–83 (TKKRKTFDSSRQRAEGTDIPTVKPLKPRPEPPKKPSNWRRK). Residues 48 to 58 (TFDSSRQRAEG) show a composition bias toward basic and acidic residues. Residues 118 to 147 (DYIQCPYCQRRFNENAADRHINFCKEQAAR) form a C2HC/C3H-type 2 zinc finger. Residues Cys122, Cys125, His137, and Cys141 each contribute to the Zn(2+) site. Residues 149–225 (SNKGKFSTDS…NKPQTLSPSH (77 aa)) form a disordered region. The span at 176-187 (SNPPGIPSSGSS) shows a compositional bias: low complexity. 2 stretches are compositionally biased toward polar residues: residues 188–198 (RLPQPSTTSKT) and 206–223 (KASS…TLSP). Ser222 carries the phosphoserine modification. A Phosphothreonine modification is found at Thr243. A Phosphoserine modification is found at Ser291.

The protein belongs to the ZC2HC1 family. Zn(2+) serves as cofactor.

This is Zinc finger C2HC domain-containing protein 1A (Zc2hc1a) from Mus musculus (Mouse).